The following is an 839-amino-acid chain: Autophagy-related protein 9A (839 aa).

Residues M1–G21 form a disordered region. A2 carries the post-translational modification N-acetylalanine. At A2–C61 the chain is on the cytoplasmic side. The Tyrosine-based sorting signal motif lies at Y8–L11. Phosphoserine occurs at positions 14, 16, and 18. A helical transmembrane segment spans residues M62–V84. Residues S85–E128 are Lumenal-facing. N99 carries an N-linked (GlcNAc...) asparagine glycan. A helical transmembrane segment spans residues N129–I154. Residues C155–I290 lie on the Cytoplasmic side of the membrane. An intramembrane segment occupies L291–C301. Topologically, residues P302–V319 are cytoplasmic. Residues L320–G328 lie within the membrane without spanning it. Topologically, residues A329–P371 are cytoplasmic. Residues L372–Y397 traverse the membrane as a helical segment. Over D398–H406 the chain is Lumenal. The chain crosses the membrane as a helical span at residues V407–F424. At I425–Q470 the chain is on the cytoplasmic side. The stretch at Y471–L480 is an intramembrane region. The Cytoplasmic portion of the chain corresponds to L481–P483. The stretch at I484–F492 is an intramembrane region. Residues C493–V839 lie on the Cytoplasmic side of the membrane. A phosphoserine mark is found at S656, S735, S738, S741, and S828. 2 disordered regions span residues S656–V688 and Q719–V839. A compositionally biased stretch (basic and acidic residues) spans E724–D736. Acidic residues-rich tracts occupy residues E737–G747 and V823–L832.

The protein belongs to the ATG9 family. Homotrimer; forms a homotrimer with a central pore that forms a path between the two membrane leaflets. Interacts (via cytoplasmic its C-terminus) with ATG2A. Interacts with SUPT20H. Interacts (via the tyrosine-based sorting signal motif) with AP4M1; promoting association with the AP-4 complex. Interacts with ARFIP1 and ARFIP2. Interacts with PI4K2A and PI4KB. Interacts with ATG4A; the interaction is direct and promotes ATG9A trafficking. Ufmylated in a DDRGK1 dependent manner.

The protein localises to the preautophagosomal structure membrane. It localises to the cytoplasmic vesicle. Its subcellular location is the autophagosome membrane. The protein resides in the golgi apparatus. It is found in the trans-Golgi network membrane. The protein localises to the late endosome membrane. It localises to the recycling endosome membrane. Its subcellular location is the endoplasmic reticulum membrane. The protein resides in the mitochondrion membrane. The enzyme catalyses a 1,2-diacyl-sn-glycero-3-phosphocholine(in) = a 1,2-diacyl-sn-glycero-3-phosphocholine(out). It carries out the reaction a 1,2-diacyl-sn-glycero-3-phospho-L-serine(in) = a 1,2-diacyl-sn-glycero-3-phospho-L-serine(out). The catalysed reaction is a 1,2-diacyl-sn-glycero-3-phosphoethanolamine(in) = a 1,2-diacyl-sn-glycero-3-phosphoethanolamine(out). In terms of biological role, phospholipid scramblase involved in autophagy by mediating autophagosomal membrane expansion. Cycles between the preautophagosomal structure/phagophore assembly site (PAS) and the cytoplasmic vesicle pool and supplies membrane for the growing autophagosome. Lipid scramblase activity plays a key role in preautophagosomal structure/phagophore assembly by distributing the phospholipids that arrive through ATG2 (ATG2A or ATG2B) from the cytoplasmic to the luminal leaflet of the bilayer, thereby driving autophagosomal membrane expansion. Also required to supply phosphatidylinositol 4-phosphate to the autophagosome initiation site by recruiting the phosphatidylinositol 4-kinase beta (PI4KB) in a process dependent on ARFIP2, but not ARFIP1. In addition to autophagy, also plays a role in necrotic cell death. In Bos taurus (Bovine), this protein is Autophagy-related protein 9A.